Here is a 359-residue protein sequence, read N- to C-terminus: Oplophorus-luciferin 2-monooxygenase non-catalytic subunit (359 aa).

Residues 1 to 39 form the signal peptide; sequence MAVNFKFSLLTITIVVNILVYCNASAIKFDVDLEKVPSN. LRR repeat units follow at residues 135–158, 160–180, 181–203, 228–251, 255–278, 280–300, 302–325, and 331–356; these read AATL…EMSQ, TKLN…ALSS, DTLA…AFQT, SPKL…AIKL, GPTT…AVEG, QGIL…VWRP, LENL…MWLI, and LAKI…VFHA.

Heterotetramer of a catalytic 19 kDa and a non-catalytic 35 kDa subunit.

It is found in the secreted. Non-catalytic subunit of oplophorus-luciferin 2-monooxygenase. May stabilize the active conformation of the catalytic subunit. In Oplophorus gracilirostris (Luminous shrimp), this protein is Oplophorus-luciferin 2-monooxygenase non-catalytic subunit.